We begin with the raw amino-acid sequence, 237 residues long: MEQNDNGLFIKQERFEVLAILREICKQRTPLKVVNDRQQFQSLLLSVGPDNIVFSGDEADNRVDGECTIVIESHDAKIEFSVGQAEFTDHQGVNACSTRLPKELIYIQRRRQFRVTTPHWREFLCSGEYADGSEYQLRIHDLSAGGVGLRVDGPLPENLQPGFQFKKALLDLGSYGSFKVNMELVVINEDHELDDDDNMVHFSRLSCRFMKLGLAMERKIQSAVFAFELDFNKKKKR.

In terms of domain architecture, PilZ spans 108 to 225 (QRRRQFRVTT…MERKIQSAVF (118 aa)).

This sequence belongs to the YcgR family. Monomer. Interacts with the flagellar basal bodies.

The protein localises to the bacterial flagellum basal body. Its function is as follows. Acts as a flagellar brake, regulating swimming and swarming in a bis-(3'-5') cyclic diguanylic acid (c-di-GMP)-dependent manner. Binds 1 c-di-GMP dimer per subunit. Increasing levels of c-di-GMP lead to decreased motility. This chain is Flagellar brake protein YcgR, found in Serratia proteamaculans (strain 568).